The primary structure comprises 1490 residues: Leucine-rich repeat-containing protein 7 (1490 aa).

17 LRR repeats span residues 23 to 44 (IISV…VFNF), 47 to 68 (TLEE…LFNC), 70 to 91 (ALRK…IASL), 93 to 114 (NLKE…IKCC), 116 to 137 (CLTI…FTQL), 139 to 161 (NLTQ…GRLV), 162 to 183 (KLRI…MHKL), 185 to 206 (QLER…LDQI), 208 to 229 (NLRE…IGKL), 231 to 253 (MLVY…SGCE), 254 to 275 (ALED…IGLL), 277 to 298 (KLTT…IGNL), 300 to 321 (LLEE…IGYL), 323 to 344 (SLRT…IGSC), 346 to 367 (NVTV…IGQM), 369 to 391 (RLRV…TKLK), and 392 to 413 (ELAA…QTEA). Residues Ser439, Ser441, and Ser443 each carry the phosphoserine modification. Residues 663–676 (KKESTDESEVDKTH) show a composition bias toward basic and acidic residues. Disordered regions lie at residues 663 to 709 (KKES…VGSL), 775 to 808 (DNTG…HGRR), and 822 to 899 (ELEQ…YHDP). Positions 677-686 (CLNNSVSSGT) are enriched in polar residues. Low complexity predominate over residues 687-700 (YSDYSPSQASSASS). Positions 787–799 (ENANNNPLLSSKA) are enriched in polar residues. A Phosphothreonine modification is found at Thr831. A Phosphoserine modification is found at Ser850. Residues 859-871 (PSKLETTPTTSPL) are compositionally biased toward low complexity. Phosphothreonine is present on Thr865. At Ser869 the chain carries Phosphoserine. Positions 872 to 882 (PERKDHMKEPT) are enriched in basic and acidic residues. Ser947, Ser949, and Ser1118 each carry phosphoserine. The residue at position 1149 (Arg1149) is an Omega-N-methylarginine. Residues 1194–1217 (LTQRRPLSARSYSTESYGASQTRP) show a composition bias toward polar residues. The tract at residues 1194 to 1218 (LTQRRPLSARSYSTESYGASQTRPV) is disordered. Ser1233 is modified (phosphoserine). Disordered regions lie at residues 1238–1265 (GNYG…SCGK) and 1282–1312 (RLDR…PYPL). A compositionally biased stretch (basic and acidic residues) spans 1243–1263 (KTSDNSDIKTRPTPVKGEESC). Over residues 1286–1307 (TPSQQSNILDNGQEDVSPSGQW) the composition is skewed to polar residues. Ser1288 and Ser1392 each carry phosphoserine. Residues 1398–1488 (EQFCVRIEKN…TVDLVIQREL (91 aa)) enclose the PDZ domain.

This sequence belongs to the LAP (LRR and PDZ) protein family. As to quaternary structure, interacts with CNKSR2 and DLG4. Interacts with CTNND2/Catenin delta-2. Forms a complex with N-cadherin through CTNND2. Interacts with CAMK2A. O-glycosylated and phosphorylated. As to expression, brain-specific. Highly concentrated at synapses.

The protein localises to the cytoplasm. Its subcellular location is the postsynaptic density. In terms of biological role, required for normal synaptic spine architecture and function. Necessary for DISC1 and GRM5 localization to postsynaptic density complexes and for both N-methyl D-aspartate receptor-dependent and metabotropic glutamate receptor-dependent long term depression. The polypeptide is Leucine-rich repeat-containing protein 7 (Lrrc7) (Rattus norvegicus (Rat)).